The following is a 247-amino-acid chain: Fasciclin-like arabinogalactan protein 13 (247 aa).

The first 25 residues, 1–25 (MATTPLLLLLLTAVFLSTEITAQRA), serve as a signal peptide directing secretion. The FAS1 domain occupies 34–179 (PINITAILEK…LAVYVVDMVL (146 aa)). Asparagine 36, asparagine 55, asparagine 68, asparagine 141, and asparagine 150 each carry an N-linked (GlcNAc...) asparagine glycan. Positions 189–228 (KISPMAPPPKSKSPDVSDDSESSKKAAAPSESEKSGSGEM) are disordered. A lipid anchor (GPI-anchor amidated glycine) is attached at glycine 224. A propeptide spans 225–247 (SGEMNTGLGLGLGLVVLCLKFLL) (removed in mature form).

It belongs to the fasciclin-like AGP family.

The protein resides in the cell membrane. May be a cell surface adhesion protein. This chain is Fasciclin-like arabinogalactan protein 13 (FLA13), found in Arabidopsis thaliana (Mouse-ear cress).